The chain runs to 483 residues: MLPTSVSWSLYLKTFRSHLLRAPQIVLKRMSSSIDISKINSWNKEFQSDLTHQLATTVLKNYNADDALLNKTRLQKQDNRVFNTVVSTDSTPVTNQKSSGRCWLFAATNQLRLNVLSELNLKEFELSQAYLFFYDKLEKANYFLDQIVSSADQDIDSRLVQYLLAAPTEDGGQYSMFLNLVKKYGLIPKDLYGDLPYSTTASRKWNSLLTTKLREFAETLRTALKERSADDSIIVTLREQMQREIFRLMSLFMDIPPVQPNEQFTWEYVDKDKKIHTIKSTPLEFASKYAKLDPSTPVSLINDPRHPYGKLIKIDRLGNVLGGDAVIYLNVDNETLSKLVVKRLQNNKAVFFGSHTPKFMDKKTGVMDIELWNYPAIGYNLPQQKASRIRYHESLMTHAMLITGCHVDETSKLPLRYRVENSWGKDSGKDGLYVMTQKYFEEYCFQIVVDINELPKELASKFTSGKEEPIVLPIWDPMGALAK.

Residues 1–30 constitute a mitochondrion transit peptide; that stretch reads MLPTSVSWSLYLKTFRSHLLRAPQIVLKRM. Active-site residues include Cys-102, His-398, and Asn-421. Lys-483 is a propeptide (removed in mature form; by autocatalysis).

The protein belongs to the peptidase C1 family. Homohexamer. Binds to nucleic acids. Binds single-stranded DNA and RNA with higher affinity than double-stranded DNA. In terms of processing, the N-terminus of isoform Cytoplasmic is blocked.

The protein localises to the mitochondrion. Its subcellular location is the cytoplasm. The enzyme catalyses Inactivates bleomycin B2 (a cytotoxic glycometallopeptide) by hydrolysis of a carboxyamide bond of beta-aminoalanine, but also shows general aminopeptidase activity. The specificity varies somewhat with source, but amino acid arylamides of Met, Leu and Ala are preferred.. Its activity is regulated as follows. Inhibited by E64, a specific inhibitor of cysteine proteases, N-ethylmaleimide, iodacetamide, and mercury and zinc ions. Functionally, the normal physiological role of the enzyme is unknown, but it is not essential for the viability of yeast cells. Has aminopeptidase activity, shortening substrate peptides sequentially by 1 amino acid. Has bleomycin hydrolase activity, which can protect the cell from the toxic effects of bleomycin. Has homocysteine-thiolactonase activity, protecting the cell against homocysteine toxicity. Acts as a repressor in the GAL4 regulatory system, but this does not require either the peptidase or nucleic acid-binding activities. The protein is Cysteine proteinase 1, mitochondrial (LAP3) of Saccharomyces cerevisiae (strain YJM789) (Baker's yeast).